Here is a 229-residue protein sequence, read N- to C-terminus: Complex I assembly factor TMEM126B, mitochondrial (229 aa).

4 consecutive transmembrane segments (helical) span residues 71 to 91 (IRGT…ANLV), 109 to 129 (LTTL…TDAL), 140 to 160 (VLRS…ALAF), and 198 to 218 (VPLL…YAVC).

As to quaternary structure, part of the mitochondrial complex I assembly/MCIA complex that comprises at least the core subunits TMEM126B, NDUFAF1, ECSIT and ACAD9 and complement subunits such as COA1 and TMEM186. Associates with the intermediate 370 kDa subcomplex of incompletely assembled complex I. Interacts with TMEM70.

The protein localises to the mitochondrion membrane. In terms of biological role, as part of the MCIA complex, involved in the assembly of the mitochondrial complex I. Participates in constructing the membrane arm of complex I. This Rattus norvegicus (Rat) protein is Complex I assembly factor TMEM126B, mitochondrial.